A 565-amino-acid chain; its full sequence is Bifunctional dihydrofolate reductase-thymidylate synthase 2 (565 aa).

One can recognise a DHFR domain in the interval T65–R242. V69 provides a ligand contact to substrate. NADP(+) is bound by residues A71 and G77 to K83. A substrate-binding site is contributed by D91. Residues R115 to T117 and L136 to S139 each bind NADP(+). Residue I178 coordinates substrate. G179–E186 contributes to the NADP(+) binding site. T199 serves as a coordination point for substrate. Residues S245–H280 are hinge. The interval E281–V565 is thymidylate synthase. R302 contacts dUMP. C447 is an active-site residue. DUMP-binding positions include H448, Q466–D470, N478, and H508–Y510.

It in the N-terminal section; belongs to the dihydrofolate reductase family. In the C-terminal section; belongs to the thymidylate synthase family. In terms of assembly, heterodimer or homodimer.

It catalyses the reaction (6S)-5,6,7,8-tetrahydrofolate + NADP(+) = 7,8-dihydrofolate + NADPH + H(+). It carries out the reaction dUMP + (6R)-5,10-methylene-5,6,7,8-tetrahydrofolate = 7,8-dihydrofolate + dTMP. It functions in the pathway cofactor biosynthesis; tetrahydrofolate biosynthesis; 5,6,7,8-tetrahydrofolate from 7,8-dihydrofolate: step 1/1. In terms of biological role, bifunctional enzyme. Involved in de novo dTMP biosynthesis. Key enzyme in folate metabolism. Can play two different roles depending on the source of dihydrofolate: de novo synthesis of tetrahydrofolate or recycling of the dihydrofolate released as one of the end products of the TS catalyzed reaction. Catalyzes an essential reaction for de novo glycine and purine synthesis, DNA precursor synthesis, and for the conversion of dUMP to dTMP. In Arabidopsis thaliana (Mouse-ear cress), this protein is Bifunctional dihydrofolate reductase-thymidylate synthase 2 (THY-2).